We begin with the raw amino-acid sequence, 926 residues long: MKKTRSTTLRRAWPSSDFSDRASDRMRSRSEKDYRLHKRFPAAFAPQASRGYMTSGDVSPISMSPISQSQFIPLGEILCLAISAMNSARKPVTQEALMEHLTTCFPGVPTPSQEILRHTLNTLVRERKIYPTPDGYFIVTPQTYFITPSLIRTNSKWYHLDERVPDRSQCTSPQPGTITPSASGCVRERTLPRKHCDSCHCCREDVHSMHASTLQRKSAKDCKDPYCPPPLCQVPPTEKSKSTINFSYKTETLSKPKDGEKQSKKFGLKLFRLSFKKDKTKQLANFSAQFPPEEWPLRDEDTPTTIPREVEMEIIRRINPDLTVENVMRHTALMKKLEEEKAHRSKAGSSAHHSGRSKKSRTHRKSHGKSRSHSKTRVSKGDPSDGSHLDIPGEREYEFCDPLTRAPREGCFIIEHKGDNFIMHSNTNVIESHFPMTPEWDVSGELAKRRTEMPFPEPSRGSSHSKVHRSHSHTQDRRSRNERSNKAKERSRSMDNSKGPLGASSLGTPEDLAEGCSQDDQTPSQSYIDDSTLRPAQTIGHQRAHIPSASYKEVCIPEIVGGSKEPSSACSLLEPGKTPESMPSYGELSPCPAKTAVDDYFQCNTSSETVLTAPSPLGKNKEDHDTLTLVEGVKKLSPSERQTPHSSREPVGHKEESPKGPGGGPAASGGVAEGLANGRLVQHHSAEPSSLDKRKEIFSKDTLFKPLHSTLSVNSYHKSSLSLLKSHPKSPVDTLPGRCEKLEPSLGTSAAQAMPPSQRQQEPGGNQEASFDYYNVSDDDDSEEGANKNAEEEKNRDDVGTMQWLLEREKERDLQRKFEKNLTLLTPKETDSSSNQRATHSARLDSMDSSSITVDSGFNSPRTRESLASNTSSIVESNRRQNPALSPAHGGAGPTFNFRASTDPPTSEAEKLQKPSNCLQASVTSV.

Disordered stretches follow at residues 1-32 (MKKT…RSEK), 338-393 (EEEK…DIPG), 452-529 (EMPF…SYID), 564-586 (KEPS…PSYG), 633-693 (VKKL…SLDK), 723-802 (LLKS…VGTM), and 823-926 (TLLT…VTSV). Residues 18–32 (FSDRASDRMRSRSEK) are compositionally biased toward basic and acidic residues. The segment covering 353 to 378 (HSGRSKKSRTHRKSHGKSRSHSKTRV) has biased composition (basic residues). Over residues 379-393 (SKGDPSDGSHLDIPG) the composition is skewed to basic and acidic residues. Basic residues predominate over residues 463-472 (SHSKVHRSHS). Basic and acidic residues predominate over residues 473–495 (HTQDRRSRNERSNKAKERSRSMD). The span at 518–529 (QDDQTPSQSYID) shows a compositional bias: polar residues. Composition is skewed to basic and acidic residues over residues 633–658 (VKKL…EESP) and 684–693 (HSAEPSSLDK). A compositionally biased stretch (polar residues) spans 746 to 769 (LGTSAAQAMPPSQRQQEPGGNQEA). Positions 785 to 799 (GANKNAEEEKNRDDV) are enriched in basic and acidic residues. Composition is skewed to polar residues over residues 847–884 (MDSS…QNPA) and 914–926 (KPSN…VTSV).

In Mus musculus (Mouse), this protein is Storkhead-box protein 2 (Stox2).